The following is a 494-amino-acid chain: Probable cytosol aminopeptidase (494 aa).

Mn(2+)-binding residues include lysine 264 and aspartate 269. Lysine 276 is a catalytic residue. Residues aspartate 287, aspartate 346, and glutamate 348 each contribute to the Mn(2+) site. Arginine 350 is an active-site residue.

Belongs to the peptidase M17 family. Mn(2+) is required as a cofactor.

It localises to the cytoplasm. It catalyses the reaction Release of an N-terminal amino acid, Xaa-|-Yaa-, in which Xaa is preferably Leu, but may be other amino acids including Pro although not Arg or Lys, and Yaa may be Pro. Amino acid amides and methyl esters are also readily hydrolyzed, but rates on arylamides are exceedingly low.. The enzyme catalyses Release of an N-terminal amino acid, preferentially leucine, but not glutamic or aspartic acids.. Functionally, presumably involved in the processing and regular turnover of intracellular proteins. Catalyzes the removal of unsubstituted N-terminal amino acids from various peptides. The chain is Probable cytosol aminopeptidase (pepA) from Pasteurella multocida (strain Pm70).